A 953-amino-acid polypeptide reads, in one-letter code: 26S proteasome non-ATPase regulatory subunit 1 (953 aa).

Position 1 is an N-acetylmethionine (methionine 1). Threonine 273 is modified (phosphothreonine). Residues 277–319 (SVPGSTNTGTVPGSEKDSDPMETEEKTASAVAGKTPDASPEPK) are disordered. Position 290 is a phosphoserine (serine 290). The span at 290-303 (SEKDSDPMETEEKT) shows a compositional bias: basic and acidic residues. An N6-acetyllysine modification is found at lysine 310. Threonine 311 is subject to Phosphothreonine. At serine 315 the chain carries Phosphoserine. 10 PC repeats span residues 403–436 (TATA…PGSA), 441–474 (GGLY…DIVR), 476–510 (GGSL…VTGE), 511–545 (AAGL…EKIL), 547–580 (GLAV…ILRR), 581–616 (SGMY…DVRR), 617–649 (AAVE…PHVR), 651–685 (GAAM…YVRQ), 686–726 (GALI…DVMA), and 729–761 (GAIL…PSVV). Lysine 720 is subject to N6-acetyllysine. The residue at position 830 (threonine 830) is a Phosphothreonine. Serine 834 carries the post-translational modification Phosphoserine. 2 disordered regions span residues 839–881 (AKKK…LDNP) and 930–953 (AHGP…YIDD). 2 stretches are compositionally biased toward basic and acidic residues: residues 842–852 (KEKEKEKKEEE) and 859–872 (AEKK…KEPE). A compositionally biased stretch (acidic residues) spans 936 to 953 (EEEEQEPEPPEPFEYIDD).

Belongs to the proteasome subunit S1 family. As to quaternary structure, component of the 19S proteasome regulatory particle complex. The 26S proteasome consists of a 20S core particle (CP) and two 19S regulatory subunits (RP). The regulatory particle is made of a lid composed of 9 subunits, a base containing 6 ATPases and few additional components including PSMD1. Interacts with ADRM1. Interacts with ZFAND1.

Its function is as follows. Component of the 26S proteasome, a multiprotein complex involved in the ATP-dependent degradation of ubiquitinated proteins. This complex plays a key role in the maintenance of protein homeostasis by removing misfolded or damaged proteins, which could impair cellular functions, and by removing proteins whose functions are no longer required. Therefore, the proteasome participates in numerous cellular processes, including cell cycle progression, apoptosis, or DNA damage repair. The protein is 26S proteasome non-ATPase regulatory subunit 1 (Psmd1) of Mus musculus (Mouse).